We begin with the raw amino-acid sequence, 179 residues long: Large ribosomal subunit protein uL5 (179 aa).

It belongs to the universal ribosomal protein uL5 family. Part of the 50S ribosomal subunit; part of the 5S rRNA/L5/L18/L25 subcomplex. Contacts the 5S rRNA and the P site tRNA. Forms a bridge to the 30S subunit in the 70S ribosome.

This is one of the proteins that bind and probably mediate the attachment of the 5S RNA into the large ribosomal subunit, where it forms part of the central protuberance. In the 70S ribosome it contacts protein S13 of the 30S subunit (bridge B1b), connecting the 2 subunits; this bridge is implicated in subunit movement. Contacts the P site tRNA; the 5S rRNA and some of its associated proteins might help stabilize positioning of ribosome-bound tRNAs. The chain is Large ribosomal subunit protein uL5 from Neisseria meningitidis serogroup A / serotype 4A (strain DSM 15465 / Z2491).